The sequence spans 111 residues: Ribulose bisphosphate carboxylase small subunit (111 aa).

The protein belongs to the RuBisCO small chain family. In terms of assembly, heterohexadecamer of 8 large and 8 small subunits. The CcmM short form purifies from carboxysomes in complex with both RuBisCO subunits; a second complex with full-length CcmM and RuBisCO also includes carbonic anhydrase (CA, ccaA). RuBisCO-CcmM complexes are probably associated with the carboxysome shell. Isolated reduced and oxidized SSUL1 binds holo-RuBisCO (RbcL(8)-RbcS(8)) but not either subunit octamer alone; RuBisCO has a higher affinity for reduced SSUL1.

It is found in the carboxysome. In terms of biological role, ruBisCO catalyzes two reactions: the carboxylation of D-ribulose 1,5-bisphosphate, the primary event in carbon dioxide fixation, as well as the oxidative fragmentation of the pentose substrate in the photorespiration process. Both reactions occur simultaneously and in competition at the same active site. Functionally, beta-carboxysome assembly initiates when soluble RuBisCO aggregates is condensed into a liquid matrix in a pre-carboxysome by the RbcS-like domains of probably both CcmM58 and CcmM35. CcmN interacts with the N-terminus of CcmM58, and then recruits the CcmK2 major shell protein via CcmN's encapsulation peptide. Shell formation requires CcmK proteins and CcmO. CcmL caps the otherwise elongated carboxysome. Once fully encapsulated carboxysomes are formed, they migrate within the cell probably via interactions with the cytoskeleton. The protein is Ribulose bisphosphate carboxylase small subunit of Synechococcus elongatus (strain ATCC 33912 / PCC 7942 / FACHB-805) (Anacystis nidulans R2).